We begin with the raw amino-acid sequence, 595 residues long: Probable L-gulonolactone oxidase 1 (595 aa).

An N-terminal signal peptide occupies residues Met1–Ser18. In terms of domain architecture, FAD-binding PCMH-type spans Ser47–Met229.

Belongs to the oxygen-dependent FAD-linked oxidoreductase family. The cofactor is FAD.

The catalysed reaction is L-gulono-1,4-lactone + O2 = L-ascorbate + H2O2 + H(+). It participates in cofactor biosynthesis; L-ascorbate biosynthesis. Its function is as follows. May be involved in the biosynthesis of ascorbic acid. The chain is Probable L-gulonolactone oxidase 1 from Arabidopsis thaliana (Mouse-ear cress).